Here is a 132-residue protein sequence, read N- to C-terminus: Small ribosomal subunit protein uS8 (132 aa).

Belongs to the universal ribosomal protein uS8 family. Part of the 30S ribosomal subunit. Contacts proteins S5 and S12.

In terms of biological role, one of the primary rRNA binding proteins, it binds directly to 16S rRNA central domain where it helps coordinate assembly of the platform of the 30S subunit. This is Small ribosomal subunit protein uS8 from Lactococcus lactis subsp. cremoris (strain MG1363).